Consider the following 144-residue polypeptide: Maximins 4/H3 type 3 (144 aa).

The N-terminal stretch at 1–18 (MNFKYIIAVSFFIASAYA) is a signal peptide. A propeptide spanning residues 19 to 43 (RTEEKDVQSLSQRDVLEEESLREIR) is cleaved from the precursor. An Asparagine amide modification is found at Asn-70. Residues 74 to 123 (TAEDHEVMKRLEAVMRDLDSLDHPEEASERQTRGFNQEEIANLFTKKEKR) constitute a propeptide that is removed on maturation. Residue Ile-143 is modified to Isoleucine amide.

The protein belongs to the bombinin family. As to expression, expressed by the skin glands.

It is found in the secreted. Its function is as follows. Maximin-4 shows antibacterial activity against both Gram-positive and Gram-negative bacteria. It also shows antimicrobial activity against the fungus C.albicans, but not against A.flavus nor P.uticale. It has little hemolytic activity. It does not possess a significant cytotoxicity against tumor cell lines. It does not possess a significant anti-HIV activity. Maximin-H3 shows antibacterial activity against both Gram-positive and Gram-negative bacteria. It also shows antimicrobial activity against the fungus C.albicans. Shows strong hemolytic activity. The protein is Maximins 4/H3 type 3 of Bombina maxima (Giant fire-bellied toad).